We begin with the raw amino-acid sequence, 323 residues long: Acetyl esterase (323 aa).

Positions 91 to 93 match the Involved in the stabilization of the negatively charged intermediate by the formation of the oxyanion hole motif; that stretch reads HGG. Catalysis depends on residues Ser-165, Asp-262, and His-292.

The protein belongs to the 'GDXG' lipolytic enzyme family. In terms of assembly, homodimer. Interacts with MalT and MelA.

It is found in the cytoplasm. Its function is as follows. Displays esterase activity towards short chain fatty esters (acyl chain length of up to 8 carbons). Able to hydrolyze triacetylglycerol (triacetin) and tributyrylglycerol (tributyrin), but not trioleylglycerol (triolein) or cholesterol oleate. Negatively regulates MalT activity by antagonizing maltotriose binding. Inhibits MelA galactosidase activity. In Salmonella paratyphi B (strain ATCC BAA-1250 / SPB7), this protein is Acetyl esterase.